The primary structure comprises 357 residues: Holliday junction branch migration complex subunit RuvB (357 aa).

Low complexity predominate over residues 1-15 (MAIQSDSLSSLPDSP). Residues 1–30 (MAIQSDSLSSLPDSPRIVAPQPVSPNEESI) are disordered. Residues 13–195 (DSPRIVAPQP…FGIVSRLEFY (183 aa)) are large ATPase domain (RuvB-L). ATP-binding positions include leucine 34, arginine 35, glycine 76, lysine 79, threonine 80, threonine 81, 142-144 (EDF), arginine 185, tyrosine 195, and arginine 232. Mg(2+) is bound at residue threonine 80. Positions 196–266 (NTDELARIVT…AAGRALAMLD (71 aa)) are small ATPAse domain (RuvB-S). A head domain (RuvB-H) region spans residues 269–357 (PQGLDVMDRK…SGGTGELFSK (89 aa)). Positions 305, 324, and 329 each coordinate DNA.

It belongs to the RuvB family. In terms of assembly, homohexamer. Forms an RuvA(8)-RuvB(12)-Holliday junction (HJ) complex. HJ DNA is sandwiched between 2 RuvA tetramers; dsDNA enters through RuvA and exits via RuvB. An RuvB hexamer assembles on each DNA strand where it exits the tetramer. Each RuvB hexamer is contacted by two RuvA subunits (via domain III) on 2 adjacent RuvB subunits; this complex drives branch migration. In the full resolvosome a probable DNA-RuvA(4)-RuvB(12)-RuvC(2) complex forms which resolves the HJ.

It localises to the cytoplasm. It catalyses the reaction ATP + H2O = ADP + phosphate + H(+). In terms of biological role, the RuvA-RuvB-RuvC complex processes Holliday junction (HJ) DNA during genetic recombination and DNA repair, while the RuvA-RuvB complex plays an important role in the rescue of blocked DNA replication forks via replication fork reversal (RFR). RuvA specifically binds to HJ cruciform DNA, conferring on it an open structure. The RuvB hexamer acts as an ATP-dependent pump, pulling dsDNA into and through the RuvAB complex. RuvB forms 2 homohexamers on either side of HJ DNA bound by 1 or 2 RuvA tetramers; 4 subunits per hexamer contact DNA at a time. Coordinated motions by a converter formed by DNA-disengaged RuvB subunits stimulates ATP hydrolysis and nucleotide exchange. Immobilization of the converter enables RuvB to convert the ATP-contained energy into a lever motion, pulling 2 nucleotides of DNA out of the RuvA tetramer per ATP hydrolyzed, thus driving DNA branch migration. The RuvB motors rotate together with the DNA substrate, which together with the progressing nucleotide cycle form the mechanistic basis for DNA recombination by continuous HJ branch migration. Branch migration allows RuvC to scan DNA until it finds its consensus sequence, where it cleaves and resolves cruciform DNA. This chain is Holliday junction branch migration complex subunit RuvB, found in Bordetella bronchiseptica (strain ATCC BAA-588 / NCTC 13252 / RB50) (Alcaligenes bronchisepticus).